The chain runs to 40 residues: DAEHKSEIVHRFNDLKEEKFKGAALITFAQFLHKKPEEEA.

Residues 1–40 (DAEHKSEIVHRFNDLKEEKFKGAALITFAQFLHKKPEEEA) form the Albumin domain. Histidine 4 is a binding site for Cu cation.

It belongs to the ALB/AFP/VDB family. Plasma.

The protein localises to the secreted. Functionally, serum albumin, the main protein of plasma, has a good binding capacity for water, Ca(2+), Na(+), K(+), fatty acids, hormones, bilirubin and drugs. Its main function is the regulation of the colloidal osmotic pressure of blood. The chain is 67 kDa serum albumin from Trachemys scripta (Red-eared slider turtle).